A 320-amino-acid polypeptide reads, in one-letter code: Probable cell division protein WhiA (320 aa).

The segment at residues 282-315 (TLKELGEMLSPAIGKSGVNHRLRKIDEIATKLQE) is a DNA-binding region (H-T-H motif).

This sequence belongs to the WhiA family.

In terms of biological role, involved in cell division and chromosome segregation. The sequence is that of Probable cell division protein WhiA from Alkaliphilus oremlandii (strain OhILAs) (Clostridium oremlandii (strain OhILAs)).